Here is a 231-residue protein sequence, read N- to C-terminus: Ureidoacrylate amidohydrolase RutB (231 aa).

The Proton acceptor role is filled by Asp25. Lys134 is an active-site residue. Cys167 functions as the Nucleophile in the catalytic mechanism.

The protein belongs to the isochorismatase family. RutB subfamily.

The enzyme catalyses (Z)-3-ureidoacrylate + H2O + H(+) = (Z)-3-aminoacrylate + NH4(+) + CO2. The catalysed reaction is (Z)-3-ureidoacrylate + H2O = (Z)-3-aminoacrylate + carbamate + H(+). It catalyses the reaction (Z)-2-methylureidoacrylate + H2O + H(+) = (Z)-2-methylaminoacrylate + NH4(+) + CO2. Functionally, hydrolyzes ureidoacrylate to form aminoacrylate and carbamate. The carbamate hydrolyzes spontaneously, thereby releasing one of the nitrogen atoms of the pyrimidine ring as ammonia and one of its carbon atoms as CO2. The polypeptide is Ureidoacrylate amidohydrolase RutB (Escherichia coli O157:H7 (strain EC4115 / EHEC)).